We begin with the raw amino-acid sequence, 124 residues long: MALKIRLARGGSKKRPYYQIVVADARSPRDGRFLEKLGSWNPMLAKDDEKRIELNAERVQHWIAQGAQPTDRVMRFLDQAGLAKRPARNNPTKAQPGKKAQERAAEAKQKAEEAAAAASEAAAE.

Residues Ala80–Glu124 form a disordered region. A compositionally biased stretch (basic and acidic residues) spans Lys99–Glu113. Over residues Ala114 to Glu124 the composition is skewed to low complexity.

The protein belongs to the bacterial ribosomal protein bS16 family.

The chain is Small ribosomal subunit protein bS16 from Rhizobium meliloti (strain 1021) (Ensifer meliloti).